We begin with the raw amino-acid sequence, 412 residues long: FAD-dependent monooxygenase nscC (412 aa).

The N-terminal stretch at 1–21 (MAKPQATVLIIGAGISGLTTS) is a signal peptide. Residues Glu35 and Ala46 each coordinate FAD. Asn92 carries N-linked (GlcNAc...) asparagine glycosylation. Position 119 (Arg119) interacts with FAD. Asn170 and Asn231 each carry an N-linked (GlcNAc...) asparagine glycan. FAD is bound by residues Asp326 and Gly339.

This sequence belongs to the paxM FAD-dependent monooxygenase family. It depends on FAD as a cofactor.

It functions in the pathway secondary metabolite biosynthesis. FAD-dependent monooxygenase; part of the gene cluster that mediates the biosynthesis of neosartoricin B, a prenylated anthracenone that probably exhibits T-cell antiproliferative activity, suggestive of a physiological role as an immunosuppressive agent. The non-reducing polyketide synthase nscA probably synthesizes and cyclizes the decaketide backbone. The hydrolase nscB then mediates the product release through hydrolysis followed by spontaneous decarboxylation. The prenyltransferase nscD catalyzes the addition of the dimethylallyl group to the aromatic C5. The FAD-dependent monooxygenase nscC is then responsible for the stereospecific hydroxylation at C2. Neosartoricin B can be converted into two additional compounds neosartoricins C and D. Neosartoricin C is a spirocyclic compound that is cyclized through the attack of C3 hydroxyl on C14, followed by dehydration. On the other hand, neosartoricin D is a further cyclized compound in which attack of C2 on C14 in neosartoricin C results in the formation of the acetal-containing dioxabicyclo-octanone ring. Both of these compounds are novel and possibly represent related metabolites of the gene cluster. This chain is FAD-dependent monooxygenase nscC, found in Arthroderma otae (strain ATCC MYA-4605 / CBS 113480) (Microsporum canis).